The sequence spans 434 residues: Eukaryotic translation initiation factor 3 subunit E-1 (434 aa).

The PCI domain occupies 219 to 392; the sequence is FFNHPKGRDL…GHVVMGTQPL (174 aa).

It belongs to the eIF-3 subunit E family. Component of the eukaryotic translation initiation factor 3 (eIF-3) complex. The eIF-3 complex interacts with pix. Interacts with mxt.

The protein resides in the cytoplasm. In terms of biological role, component of the eukaryotic translation initiation factor 3 (eIF-3) complex, which is involved in protein synthesis of a specialized repertoire of mRNAs and, together with other initiation factors, stimulates binding of mRNA and methionyl-tRNAi to the 40S ribosome. The eIF-3 complex specifically targets and initiates translation of a subset of mRNAs involved in cell proliferation. The polypeptide is Eukaryotic translation initiation factor 3 subunit E-1 (eIF3-S6-1) (Drosophila willistoni (Fruit fly)).